The following is a 304-amino-acid chain: Peroxisomal membrane protein 13 (304 aa).

2 disordered regions span residues 1-78 (MASQ…WEQQ) and 258-304 (PRKM…VWGN). Composition is skewed to polar residues over residues 19–44 (NTSG…SGTA) and 56–67 (RPNTAANMNSLS). Residues 262–279 (QQPPQGPNGLPLPHQPHG) show a composition bias toward low complexity.

It belongs to the peroxin-13 family. In terms of assembly, interacts with PEX14; forming the PEX13-PEX14 docking complex. Interacts (via N-terminus) with PEX7, but not with PEX5. Interacts with APEM9 (via N-terminus). Highly expressed in pollen. Detected in shoots, roots, stems, leaves, inflorescences and emasculated postils. Strongly expressed in both male and female gametophytes during fertilization.

It is found in the peroxisome membrane. Functionally, component of the PEX13-PEX14 docking complex, a translocon channel that specifically mediates the import of peroxisomal cargo proteins bound to PEX5 receptor. The PEX13-PEX14 docking complex forms a large import pore which can be opened to a diameter of about 9 nm. Mechanistically, PEX5 receptor along with cargo proteins associates with the PEX14 subunit of the PEX13-PEX14 docking complex in the cytosol, leading to the insertion of the receptor into the organelle membrane with the concomitant translocation of the cargo into the peroxisome matrix. Essential for pollen-tube discharge that take place only in the presence of functional peroxisomes in either the male or the female gametophyte. The sequence is that of Peroxisomal membrane protein 13 from Arabidopsis thaliana (Mouse-ear cress).